Reading from the N-terminus, the 260-residue chain is Methionine-rich nacre protein (260 aa).

The signal sequence occupies residues 1 to 19; it reads MRRILCLAVVIFIINDVSS. A disordered region spans residues 23-75; the sequence is GSNKNWKKSGMSLSSPGNKKPTGNNNAVPQKSKMNNVNQNSLSQPKRPSHPGN. Over residues 33–68 the composition is skewed to polar residues; it reads MSLSSPGNKKPTGNNNAVPQKSKMNNVNQNSLSQPK.

In terms of tissue distribution, expressed in mantle distal zone, mantle margin and grafted pearl pockets. Not expressed in adductor muscle, gills, hemocytes or ungrafted pearl pockets. Within the mantle, specifically expressed in mineralizing outer epithelium cells (at protein level). After secretion incorporated into acid-insoluble nacre matrix of shell and pearl (at protein level). Not found in acid-insoluble matrix of shell prisms (at protein level).

It is found in the secreted. This is Methionine-rich nacre protein from Margaritifera margaritifera (Freshwater pearl mussel).